Consider the following 99-residue polypeptide: Plastocyanin B'/B'' (99 aa).

The Plastocyanin-like domain occupies 1 to 99; sequence IEVLLGSDDG…AGMVGKVTVN (99 aa). Positions 37, 84, 87, and 92 each coordinate Cu cation.

This sequence belongs to the plastocyanin family. Cu(2+) serves as cofactor.

The protein resides in the plastid. Its subcellular location is the chloroplast thylakoid membrane. In terms of biological role, participates in electron transfer between P700 and the cytochrome b6-f complex in photosystem I. This Nicotiana tabacum (Common tobacco) protein is Plastocyanin B'/B''.